Consider the following 182-residue polypeptide: Adenylate kinase (182 aa).

Residue 12–17 participates in ATP binding; that stretch reads GAGKGT. Positions 32–61 are NMP; it reads STGDLLREEVSGGTDLGKKAELIMNKGELV. AMP is bound by residues Thr-33, Arg-38, 59–61, 85–88, and Gln-92; these read ELV and GFPR. The interval 126 to 132 is LID; sequence GRGRKDD. Arg-127 lines the ATP pocket. AMP contacts are provided by Arg-129 and Arg-140. Gly-168 provides a ligand contact to ATP.

Belongs to the adenylate kinase family. Monomer.

It is found in the cytoplasm. The enzyme catalyses AMP + ATP = 2 ADP. Its pathway is purine metabolism; AMP biosynthesis via salvage pathway; AMP from ADP: step 1/1. In terms of biological role, catalyzes the reversible transfer of the terminal phosphate group between ATP and AMP. Plays an important role in cellular energy homeostasis and in adenine nucleotide metabolism. The sequence is that of Adenylate kinase from Prochlorococcus marinus (strain SARG / CCMP1375 / SS120).